The sequence spans 189 residues: Fine tangled pili major subunit (189 aa).

It belongs to the Dps family. In terms of assembly, hexamer.

It is found in the fimbrium. Functionally, may contribute to bacterial adherence, or be involved in the protection of the bacteria, or both. The sequence is that of Fine tangled pili major subunit (ftpA) from Haemophilus ducreyi (strain 35000HP / ATCC 700724).